The primary structure comprises 721 residues: BBSome complex member BBS2 (721 aa).

Positions 325 to 369 (KGNLLDTSVEQGLIRELSQKKQNLLLELRNYEENTKAELSSPLNE) form a coiled coil.

In terms of assembly, part of BBSome complex, that contains BBS1, BBS2, BBS4, BBS5, BBS7, BBS8/TTC8, BBS9 and BBIP10. Interacts (via C-terminus) with BBS7. Interacts (via coiled coil domain) with MKKS. Interacts with CCDC28B. Interacts with DLEC1.

The protein localises to the cell projection. Its subcellular location is the cilium membrane. The protein resides in the cytoplasm. It is found in the cytoskeleton. It localises to the microtubule organizing center. The protein localises to the centrosome. Its subcellular location is the centriolar satellite. Functionally, the BBSome complex is thought to function as a coat complex required for sorting of specific membrane proteins to the primary cilia. The BBSome complex is required for ciliogenesis but is dispensable for centriolar satellite function. This ciliogenic function is mediated in part by the Rab8 GDP/GTP exchange factor, which localizes to the basal body and contacts the BBSome. Rab8(GTP) enters the primary cilium and promotes extension of the ciliary membrane. Firstly the BBSome associates with the ciliary membrane and binds to RAB3IP/Rabin8, the guanosyl exchange factor (GEF) for Rab8 and then the Rab8-GTP localizes to the cilium and promotes docking and fusion of carrier vesicles to the base of the ciliary membrane. The BBSome complex, together with the LTZL1, controls SMO ciliary trafficking and contributes to the sonic hedgehog (SHH) pathway regulation. Required for proper BBSome complex assembly and its ciliary localization. The sequence is that of BBSome complex member BBS2 (Bbs2) from Rattus norvegicus (Rat).